A 438-amino-acid polypeptide reads, in one-letter code: sn-glycerol-3-phosphate-binding periplasmic protein UgpB (438 aa).

An N-terminal signal peptide occupies residues 1-23; sequence MISLRHTALGLALSLAFTGQALA. Residues tyrosine 65, glutamate 89, serine 144, serine 270, glycine 307, tyrosine 346, and arginine 397 each contribute to the sn-glycerol 3-phosphate site.

Belongs to the bacterial solute-binding protein 1 family. The complex is composed of two ATP-binding proteins (UgpC), two transmembrane proteins (UgpA and UgpE) and a solute-binding protein (UgpB).

It localises to the periplasm. Its function is as follows. Part of the ABC transporter complex UgpBAEC involved in sn-glycerol-3-phosphate (G3P) import. Binds G3P. This is sn-glycerol-3-phosphate-binding periplasmic protein UgpB (ugpB) from Salmonella typhi.